A 1940-amino-acid chain; its full sequence is Myosin-1B (1940 aa).

Positions 33 to 82 (DAKSSVFVVHAKESYVKSTIQSKESGKVTVKTEGGETLTVKEDQIFSMNP) constitute a Myosin N-terminal SH3-like domain. One can recognise a Myosin motor domain in the interval 86–783 (DKIEDMAMMT…LLGLLEEMRD (698 aa)). Residue Lys-130 is modified to N6,N6,N6-trimethyllysine. Position 179–186 (179–186 (GESGAGKT)) interacts with ATP. Actin-binding regions lie at residues 660-682 (LNKL…IPNE) and 762-776 (KFGH…GLLG). Positions 786-815 (LAQLITRTQARCRGFLMRVEFKKMMERRES) constitute an IQ domain. Residues 844 to 1940 (LLKSAESEKE…EIGKKAESEE (1097 aa)) are a coiled coil. The interval 1912 to 1940 (EERADIAESQVNKLRAKSREIGKKAESEE) is disordered. A compositionally biased stretch (basic and acidic residues) spans 1928 to 1940 (KSREIGKKAESEE).

The protein belongs to the TRAFAC class myosin-kinesin ATPase superfamily. Myosin family. In terms of assembly, muscle myosin is a hexameric protein that consists of 2 heavy chain subunits (MHC), 2 alkali light chain subunits (MLC) and 2 regulatory light chain subunits (MLC-2).

It localises to the cytoplasm. It is found in the myofibril. Muscle contraction. This is Myosin-1B (MYH1B) from Gallus gallus (Chicken).